Consider the following 380-residue polypeptide: Ribosomal RNA large subunit methyltransferase G (380 aa).

Belongs to the methyltransferase superfamily. RlmG family.

It localises to the cytoplasm. It catalyses the reaction guanosine(1835) in 23S rRNA + S-adenosyl-L-methionine = N(2)-methylguanosine(1835) in 23S rRNA + S-adenosyl-L-homocysteine + H(+). Its function is as follows. Specifically methylates the guanine in position 1835 (m2G1835) of 23S rRNA. This is Ribosomal RNA large subunit methyltransferase G from Streptomyces avermitilis (strain ATCC 31267 / DSM 46492 / JCM 5070 / NBRC 14893 / NCIMB 12804 / NRRL 8165 / MA-4680).